The sequence spans 449 residues: Glucose-6-phosphate isomerase (449 aa).

Residue Glu291 is the Proton donor of the active site. Active-site residues include His312 and Lys426.

Belongs to the GPI family.

It localises to the cytoplasm. It carries out the reaction alpha-D-glucose 6-phosphate = beta-D-fructose 6-phosphate. The protein operates within carbohydrate biosynthesis; gluconeogenesis. It functions in the pathway carbohydrate degradation; glycolysis; D-glyceraldehyde 3-phosphate and glycerone phosphate from D-glucose: step 2/4. In terms of biological role, catalyzes the reversible isomerization of glucose-6-phosphate to fructose-6-phosphate. This is Glucose-6-phosphate isomerase from Enterococcus faecalis (strain ATCC 700802 / V583).